The primary structure comprises 362 residues: Forkhead box protein F (362 aa).

Residues 19–70 (LDSTAPNNSHRTIKAENYFNEDEEDYNENSHEDSEDSKEDSDGQGCRSRKRK) are disordered. Residues 37–57 (FNEDEEDYNENSHEDSEDSKE) are compositionally biased toward acidic residues. The segment at residues 72–169 (KPPFSYIALI…EENGFRRRPR (98 aa)) is a DNA-binding region (fork-head).

The protein localises to the nucleus. Functionally, transcription factor that is required for cell fate of coelomocytes which are non-muscle mesodermal cells. Acts in concert with, and by activating expression of, the homeodomain gene ceh-34. Binds to the sequence motif 5'-ATAAA[T/C]A-3'. The polypeptide is Forkhead box protein F (Caenorhabditis elegans).